Here is a 544-residue protein sequence, read N- to C-terminus: Chaperonin GroEL 2 (544 aa).

ATP-binding positions include 29–32 (TLGP), 86–90 (DGTTT), Gly-413, 479–481 (NAA), and Asp-495.

This sequence belongs to the chaperonin (HSP60) family. In terms of assembly, forms a cylinder of 14 subunits composed of two heptameric rings stacked back-to-back. Interacts with the co-chaperonin GroES.

It localises to the cytoplasm. It carries out the reaction ATP + H2O + a folded polypeptide = ADP + phosphate + an unfolded polypeptide.. Its function is as follows. Together with its co-chaperonin GroES, plays an essential role in assisting protein folding. The GroEL-GroES system forms a nano-cage that allows encapsulation of the non-native substrate proteins and provides a physical environment optimized to promote and accelerate protein folding. The polypeptide is Chaperonin GroEL 2 (Prochlorococcus marinus (strain MIT 9515)).